Here is a 254-residue protein sequence, read N- to C-terminus: Ribonuclease 3 (254 aa).

One can recognise an RNase III domain in the interval 24-154; sequence LRRLQETLGV…VIGALFLDSG (131 aa). Mg(2+) is bound at residue Glu-67. Asp-71 is an active-site residue. Residues Asp-140 and Glu-143 each contribute to the Mg(2+) site. The active site involves Glu-143. One can recognise a DRBM domain in the interval 181-250; that stretch reads DYKSTLQVLA…ARLAWEQLSG (70 aa).

Belongs to the ribonuclease III family. As to quaternary structure, homodimer. The cofactor is Mg(2+).

It is found in the cytoplasm. The enzyme catalyses Endonucleolytic cleavage to 5'-phosphomonoester.. Digests double-stranded RNA. Involved in the processing of primary rRNA transcript to yield the immediate precursors to the large and small rRNAs (23S and 16S). Processes some mRNAs, and tRNAs when they are encoded in the rRNA operon. Processes pre-crRNA and tracrRNA of type II CRISPR loci if present in the organism. This is Ribonuclease 3 from Treponema pallidum (strain Nichols).